The primary structure comprises 411 residues: Glutamate dehydrogenase 3, mitochondrial (411 aa).

Residues 1 to 18 (MNALAATSRNFRQAARLL) constitute a mitochondrion transit peptide. Residue Lys-102 is part of the active site.

Belongs to the Glu/Leu/Phe/Val dehydrogenases family. As to expression, barely expressed in leaves, spikelets and roots. Glumes and stamens specific accumulation.

Its subcellular location is the mitochondrion. It carries out the reaction L-glutamate + NAD(+) + H2O = 2-oxoglutarate + NH4(+) + NADH + H(+). The catalysed reaction is L-glutamate + NADP(+) + H2O = 2-oxoglutarate + NH4(+) + NADPH + H(+). This is Glutamate dehydrogenase 3, mitochondrial (GDH3) from Oryza sativa subsp. japonica (Rice).